A 451-amino-acid chain; its full sequence is Glycine--tRNA ligase (451 aa).

Residues Arg94 and Glu164 each contribute to the substrate site. Residues 196–198 (RNE), 206–211 (FRTREF), 281–282 (EL), and 325–328 (GVER) contribute to the ATP site. Position 211–215 (211–215 (FEQME)) interacts with substrate. 321 to 325 (EPSVG) is a substrate binding site.

Belongs to the class-II aminoacyl-tRNA synthetase family. Homodimer.

The protein localises to the cytoplasm. The enzyme catalyses tRNA(Gly) + glycine + ATP = glycyl-tRNA(Gly) + AMP + diphosphate. Catalyzes the attachment of glycine to tRNA(Gly). This Mesoplasma florum (strain ATCC 33453 / NBRC 100688 / NCTC 11704 / L1) (Acholeplasma florum) protein is Glycine--tRNA ligase.